We begin with the raw amino-acid sequence, 158 residues long: Mitotic-spindle organizing protein 2B (158 aa).

Ser-34 is subject to Phosphoserine. The tract at residues 84-158 is disordered; that stretch reads RLASEPQDPA…PGKSPTRGST (75 aa). Residues 111–122 are compositionally biased toward low complexity; that stretch reads GSAALGGALALA. The span at 128–140 shows a compositional bias: polar residues; sequence EGSSQRMPRQPSA. Ser-152 bears the Phosphoserine mark.

Belongs to the MOZART2 family. In terms of assembly, associates with the gamma-tubulin ring complex (gTuRC) consisting of TUBGCP2, TUBGCP3, TUBGCP4, TUBGCP5 and TUBGCP6 and gamma-tubulin TUBG1 or TUBG2; within the complex, interacts with TUBGCP2; the interaction plays a role in gTuRC activation. Interacts with TUBG1.

The protein localises to the cytoplasm. It is found in the cytoskeleton. Its subcellular location is the microtubule organizing center. The protein resides in the centrosome. It localises to the spindle. Its function is as follows. Required for the recruitment and the assembly of the gamma-tubulin ring complex (gTuRC) at the centrosome. The gTuRC regulates the minus-end nucleation of alpha-beta tubulin heterodimers that grow into microtubule protafilaments, a critical step in centrosome duplication and spindle formation. The sequence is that of Mitotic-spindle organizing protein 2B (MZT2B) from Homo sapiens (Human).